Here is a 385-residue protein sequence, read N- to C-terminus: Enoyl-[acyl-carrier-protein] reductase, mitochondrial (385 aa).

Tyr-78 acts as the Proton donor in catalysis. Residues Asn-162, 190–193 (TSGV), 213–215 (RDR), 288–291 (YGGM), 313–315 (YWV), and Lys-378 contribute to the NADP(+) site.

Belongs to the zinc-containing alcohol dehydrogenase family. Quinone oxidoreductase subfamily. As to quaternary structure, homodimer.

It is found in the mitochondrion matrix. It carries out the reaction a 2,3-saturated acyl-[ACP] + NADP(+) = a (2E)-enoyl-[ACP] + NADPH + H(+). In terms of biological role, catalyzes the NADPH-dependent reduction of trans-2-enoyl thioesters in mitochondrial fatty acid synthesis (fatty acid synthesis type II). Fatty acid chain elongation in mitochondria uses acyl carrier protein (ACP) as an acyl group carrier, but the enzyme accepts both ACP and CoA thioesters as substrates in vitro. Required for respiration and the maintenance of the mitochondrial compartment. The polypeptide is Enoyl-[acyl-carrier-protein] reductase, mitochondrial (ETR1) (Candida glabrata (strain ATCC 2001 / BCRC 20586 / JCM 3761 / NBRC 0622 / NRRL Y-65 / CBS 138) (Yeast)).